The primary structure comprises 103 residues: Large ribosomal subunit protein bL21 (103 aa).

This sequence belongs to the bacterial ribosomal protein bL21 family. As to quaternary structure, part of the 50S ribosomal subunit. Contacts protein L20.

This protein binds to 23S rRNA in the presence of protein L20. The sequence is that of Large ribosomal subunit protein bL21 from Aeromonas hydrophila subsp. hydrophila (strain ATCC 7966 / DSM 30187 / BCRC 13018 / CCUG 14551 / JCM 1027 / KCTC 2358 / NCIMB 9240 / NCTC 8049).